The chain runs to 428 residues: MFVDQTKIDVQAGKGGDGAVAFRHEKYVPLGGPAGGDGGRGGSIILVADSGLRTLMDFRFRRKFKADNGENGRIKSQYGRGAKDVRLKVPMGTSVYDFNTGELLGDLVKNGQELVVARGGKGGIGNIHFATPTRTAPEIAENGEPGEFRTLRLELKVLADVGLVGFPSVGKSTLLSVVTKAKPKIAAYEFTTLTPNLGMVVLPDGRDFSMADLPGLIEGASKGVGLGIQFLRHVERTKVILHLVSMDPNNGRDAYEDYETIRKELAGYTKDLTSKKELIVATQMDIPGSEEKLAEFKKKLGDKTVYPISSVTHQGVSELMGKTADLVEEVAKEEAEKPAEIKVAEKEYVYKKPEDDGFKVERTGEHSFIVTGNKLERLVQRTNLDHTDGIMLLARKLKRMGVDDALREKGAVNGDDVSIADFTFEFVD.

The 158-residue stretch at 1-158 folds into the Obg domain; it reads MFVDQTKIDV…RTLRLELKVL (158 aa). The OBG-type G domain occupies 159–328; it reads ADVGLVGFPS…LMGKTADLVE (170 aa). Residues 165–172, 190–194, 212–215, 282–285, and 309–311 each bind GTP; these read GFPSVGKS, FTTLT, DLPG, TQMD, and SSV. Residues serine 172 and threonine 192 each contribute to the Mg(2+) site. The OCT domain maps to 350–428; sequence YKKPEDDGFK…IADFTFEFVD (79 aa).

It belongs to the TRAFAC class OBG-HflX-like GTPase superfamily. OBG GTPase family. In terms of assembly, monomer. It depends on Mg(2+) as a cofactor.

The protein localises to the cytoplasm. In terms of biological role, an essential GTPase which binds GTP, GDP and possibly (p)ppGpp with moderate affinity, with high nucleotide exchange rates and a fairly low GTP hydrolysis rate. Plays a role in control of the cell cycle, stress response, ribosome biogenesis and in those bacteria that undergo differentiation, in morphogenesis control. The polypeptide is GTPase Obg (Lactobacillus gasseri (strain ATCC 33323 / DSM 20243 / BCRC 14619 / CIP 102991 / JCM 1131 / KCTC 3163 / NCIMB 11718 / NCTC 13722 / AM63)).